Consider the following 954-residue polypeptide: DNA repair and telomere maintenance protein NBS1 (954 aa).

In terms of domain architecture, FHA spans 22-85 (YLFGRTVAEA…KGTLVNGVQI (64 aa)). BRCT domains are found at residues 107-186 (TLKI…NAIV) and 244-349 (GYTF…LEAI). The span at 368-377 (VSVSASVEPQ) shows a compositional bias: polar residues. 5 disordered regions span residues 368 to 431 (VSVS…FKGF), 444 to 506 (QAQS…PLPE), 528 to 580 (IEAG…KQED), 630 to 654 (VRQP…WDPR), and 692 to 954 (GIGD…GRRR). Residues 378–393 (SSEKVRPAVEDRKEVE) are compositionally biased toward basic and acidic residues. Basic residues predominate over residues 416-428 (PHRRERRTGRSRF). Over residues 458–471 (PSASQDSLFVSQRE) the composition is skewed to polar residues. Positions 541-554 (PEPEREDEDVEMVE) are enriched in acidic residues. Basic and acidic residues-rich tracts occupy residues 640–654 (RTRE…WDPR) and 704–715 (GRVPRRPKETQT). The segment covering 726–737 (DGSGFAAAAASG) has biased composition (low complexity). A compositionally biased stretch (basic and acidic residues) spans 738–751 (KGKEKDKENEKEVG). 2 stretches are compositionally biased toward low complexity: residues 801 to 815 (EVVS…ASEP) and 826 to 842 (RANA…SQTQ). Residues 936–945 (GSEEESEDDE) are compositionally biased toward acidic residues.

It belongs to the Nibrin family. Component of the MRN complex composed of two heterodimers RAD50 and MRE11 associated with a single NBS1.

It is found in the nucleus. The protein resides in the chromosome. Component of the MRN complex, which plays a central role in double-strand break (DSB) repair, DNA recombination, maintenance of telomere integrity and meiosis. The MRN complex is involved in the repair of DNA double-strand breaks (DSBs) via homologous recombination (HR), an error-free mechanism which primarily occurs during S and G2 phases. The complex (1) mediates the end resection of damaged DNA, which generates proper single-stranded DNA, a key initial steps in HR, and is (2) required for the recruitment of other repair factors and efficient activation of ATM and ATR upon DNA damage. The MRN complex possesses single-strand endonuclease activity and double-strand-specific 3'-5' exonuclease activity, which are provided by MRE11, to initiate end resection, which is required for single-strand invasion and recombination. Within the MRN complex, NBS1 acts as a protein-protein adapter, which specifically recognizes and binds phosphorylated proteins, promoting their recruitment to DNA damage sites. Recruits MRE11 and RAD50 components of the MRN complex to DSBs in response to DNA damage. This chain is DNA repair and telomere maintenance protein NBS1, found in Chaetomium thermophilum (strain DSM 1495 / CBS 144.50 / IMI 039719) (Thermochaetoides thermophila).